A 152-amino-acid chain; its full sequence is MRLWLAAVGRARPGPARDLFEEYRGRLGWPLTLKEVEARKRVAGEELKRLEADLLLAAVPPGAILVALDERGQMLASEAFARRLGTWRDQDSADIAFVIGGADGLAEEVRRRADLLLAFGPMTWPHMLVRGMLAEQIYRAQQILAGHPYHRA.

Residues L68, G100, and 119 to 124 (FGPMTW) contribute to the S-adenosyl-L-methionine site.

The protein belongs to the RNA methyltransferase RlmH family. In terms of assembly, homodimer.

It localises to the cytoplasm. It carries out the reaction pseudouridine(1915) in 23S rRNA + S-adenosyl-L-methionine = N(3)-methylpseudouridine(1915) in 23S rRNA + S-adenosyl-L-homocysteine + H(+). In terms of biological role, specifically methylates the pseudouridine at position 1915 (m3Psi1915) in 23S rRNA. The chain is Ribosomal RNA large subunit methyltransferase H from Rhodospirillum centenum (strain ATCC 51521 / SW).